Here is a 349-residue protein sequence, read N- to C-terminus: Ion-translocating oxidoreductase complex subunit D (349 aa).

Helical transmembrane passes span 20–42 (VMQR…FGWG), 77–99 (SAML…WMIV), and 124–144 (AMAA…TWIA). Thr-185 bears the FMN phosphoryl threonine mark. A run of 5 helical transmembrane segments spans residues 212–232 (STGV…LVLL), 239–259 (WHIS…GFLL), 265–285 (ASPL…FIAT), 291–311 (ATSP…VYII), and 315–335 (GGYP…APFI).

This sequence belongs to the NqrB/RnfD family. As to quaternary structure, the complex is composed of six subunits: RnfA, RnfB, RnfC, RnfD, RnfE and RnfG. The cofactor is FMN.

It is found in the cell inner membrane. Functionally, part of a membrane-bound complex that couples electron transfer with translocation of ions across the membrane. This is Ion-translocating oxidoreductase complex subunit D from Shewanella baltica (strain OS185).